Reading from the N-terminus, the 1434-residue chain is DNA-directed RNA polymerase subunit beta (1434 aa).

This sequence belongs to the RNA polymerase beta chain family. The RNAP catalytic core consists of 2 alpha, 1 beta, 1 beta' and 1 omega subunit. When a sigma factor is associated with the core the holoenzyme is formed, which can initiate transcription.

It catalyses the reaction RNA(n) + a ribonucleoside 5'-triphosphate = RNA(n+1) + diphosphate. Functionally, DNA-dependent RNA polymerase catalyzes the transcription of DNA into RNA using the four ribonucleoside triphosphates as substrates. This Ureaplasma parvum serovar 3 (strain ATCC 27815 / 27 / NCTC 11736) protein is DNA-directed RNA polymerase subunit beta.